Here is a 425-residue protein sequence, read N- to C-terminus: Serine hydroxymethyltransferase (425 aa).

Residues L120 and 124–126 (GHL) contribute to the (6S)-5,6,7,8-tetrahydrofolate site. K229 carries the N6-(pyridoxal phosphate)lysine modification. Residue 353 to 355 (SPF) participates in (6S)-5,6,7,8-tetrahydrofolate binding.

It belongs to the SHMT family. As to quaternary structure, homodimer. Requires pyridoxal 5'-phosphate as cofactor.

The protein localises to the cytoplasm. It carries out the reaction (6R)-5,10-methylene-5,6,7,8-tetrahydrofolate + glycine + H2O = (6S)-5,6,7,8-tetrahydrofolate + L-serine. Its pathway is one-carbon metabolism; tetrahydrofolate interconversion. It participates in amino-acid biosynthesis; glycine biosynthesis; glycine from L-serine: step 1/1. Functionally, catalyzes the reversible interconversion of serine and glycine with tetrahydrofolate (THF) serving as the one-carbon carrier. This reaction serves as the major source of one-carbon groups required for the biosynthesis of purines, thymidylate, methionine, and other important biomolecules. Also exhibits THF-independent aldolase activity toward beta-hydroxyamino acids, producing glycine and aldehydes, via a retro-aldol mechanism. This Thermosynechococcus vestitus (strain NIES-2133 / IAM M-273 / BP-1) protein is Serine hydroxymethyltransferase.